Reading from the N-terminus, the 218-residue chain is Putative glutamine transport system permease protein GlnP (218 aa).

The ABC transmembrane type-1 domain occupies threonine 19 to alanine 208. Helical transmembrane passes span tyrosine 25–valine 45, phenylalanine 57–proline 79, phenylalanine 86–isoleucine 108, and phenylalanine 187–isoleucine 207.

Belongs to the binding-protein-dependent transport system permease family. HisMQ subfamily.

The protein resides in the cell inner membrane. In terms of biological role, part of the binding-protein-dependent transport system for glutamine; probably responsible for the translocation of the substrate across the membrane. The protein is Putative glutamine transport system permease protein GlnP (glnP) of Rickettsia felis (strain ATCC VR-1525 / URRWXCal2) (Rickettsia azadi).